The following is a 502-amino-acid chain: Neuronal acetylcholine receptor subunit alpha-7 (502 aa).

An N-terminal signal peptide occupies residues 1 to 22; that stretch reads MRCSPGGVWLALAASLLHVSLQ. The Extracellular segment spans residues 23–233; that stretch reads GEFQRKLYKE…VTMRRRTLYY (211 aa). Arg42 and Val44 together coordinate Ca(2+). N-linked (GlcNAc...) asparagine glycosylation is found at Asn46, Asn90, and Asn133. Cysteines 150 and 164 form a disulfide. Ca(2+) contacts are provided by Ser172 and Tyr210. Cys212 and Cys213 form a disulfide bridge. A run of 3 helical transmembrane segments spans residues 234–254, 259–279, and 292–315; these read GLNL…VFLL, GEKI…MLLV, and LIAQ…VIVL. Residues 260-267 form an essential for TMEM35A/NACHO-mediated proper subunit assembly and trafficking to cell membrane region; sequence EKISLGIT. Residues 316–466 are Cytoplasmic-facing; sequence QYHHHDPDGG…CSEWKFAACV (151 aa). A helical transmembrane segment spans residues 467-489; sequence VDRLCLMAFSVFTIICTIGILMS.

The protein belongs to the ligand-gated ion channel (TC 1.A.9) family. Acetylcholine receptor (TC 1.A.9.1) subfamily. Alpha-7/CHRNA7 sub-subfamily. As to quaternary structure, homopentamer. Can also form heteropentamers with CHRNB2, mainly found in basal forebrain cholinergic neurons. Interacts with RIC3; which is required for proper folding and assembly. Interacts with LYPD6. Interacts with CANX. Post-translationally, glycosylations at Asn-46, Asn-90 and Asn-133 are essential for TMEM35A/NACHO-mediated proper subunit assembly and trafficking to the cell membrane. In terms of tissue distribution, expressed in neuronal cells. Expressed in macrophages (at protein level).

The protein resides in the postsynaptic cell membrane. Its subcellular location is the cell membrane. It carries out the reaction Ca(2+)(in) = Ca(2+)(out). The enzyme catalyses K(+)(in) = K(+)(out). It catalyses the reaction Na(+)(in) = Na(+)(out). The catalysed reaction is choline(out) = choline(in). It carries out the reaction NH4(+)(in) = NH4(+)(out). The enzyme catalyses L-arginine(in) = L-arginine(out). It catalyses the reaction guanidine(out) = guanidine(in). With respect to regulation, activated by a myriad of ligands such as acetylcholine, cytisine, nicotine, choline and epibatidine. Oligomeric amyloid-beta protein 42 activates specifially CHRNA7:CHRNB2 nAchRs. Activity is modulated by positive allosteric modulators (PAMs), such as flavonoids, with a wide range of chemical diversity, pharmacological sensitivity and efficacy. AChR activity is inhibited by the antagonists alpha-conotoxons RgIA, ImI and ImII, small disulfide-constrained peptides from cone snails. Alpha-conotoxin PnIC selectively inhibits CHRNA7:CHRNB2 over CHRNA7 homopentamer. Functionally, component of neuronal acetylcholine receptors (nAChRs) that function as pentameric, ligand-gated cation channels with high calcium permeability among other activities. nAChRs are excitatory neurotrasnmitter receptors formed by a collection of nAChR subunits known to mediate synaptic transmission in the nervous system and the neuromuscular junction. Each nAchR subunit confers differential attributes to channel properties, including activation, deactivation and desensitization kinetics, pH sensitivity, cation permeability, and binding to allosteric modulators. CHRNA7 forms homopentameric neuronal acetylcholine receptors abundantly expressed in the central nervous system, characterized by fast desensitization and high calcium permeability. Also forms heteropentamers with CHRNB2, mainly expressed in basal forebrain cholinergic neurons. Involved in the modulation of calcium-dependent signaling pathways and influences the release of neurotransmitters, including dopamine, glutamate and GABA. Also expressed in non-neuronal cells such as immune cells like lymphocytes, monocytes and macrophages. In T cells, activation induces metabotropic signaling that results in an increase of intracellular Ca2+ concentrations, independent of ionotropic receptor functions. In macrophages, required for acetylcholine-mediated inhibition of TNF and other inflammatory cytokine release. Once activated by acetylcholine, nicotine or other agonists, selectively inhibits production of pro-inflammatory cytokines while leaving anti-inflammatory cytokines undisturbed. Stimulates the cholinergic anti-inflammatory pathway, controlling inflammation by inhibiting NFKB nuclear translocation and activating the JAK2-STAT3 pathway, independently of ion channel activity. Also expressed in the urothelium where it modulates reflex bladder activity by increasing intracellular calcium through internal stores and decreasing basal ATP release. The polypeptide is Neuronal acetylcholine receptor subunit alpha-7 (Homo sapiens (Human)).